A 374-amino-acid polypeptide reads, in one-letter code: Alanine racemase (374 aa).

The active-site Proton acceptor; specific for D-alanine is the K35. Position 35 is an N6-(pyridoxal phosphate)lysine (K35). R133 is a binding site for substrate. Y261 acts as the Proton acceptor; specific for L-alanine in catalysis. M315 is a binding site for substrate.

The protein belongs to the alanine racemase family. Pyridoxal 5'-phosphate serves as cofactor.

It catalyses the reaction L-alanine = D-alanine. It functions in the pathway amino-acid biosynthesis; D-alanine biosynthesis; D-alanine from L-alanine: step 1/1. Its function is as follows. Catalyzes the interconversion of L-alanine and D-alanine. May also act on other amino acids. In Psychrobacter sp. (strain PRwf-1), this protein is Alanine racemase (alr).